Reading from the N-terminus, the 181-residue chain is Large ribosomal subunit protein uL5 (181 aa).

The protein belongs to the universal ribosomal protein uL5 family. In terms of assembly, part of the 50S ribosomal subunit; part of the 5S rRNA/L5/L18/L25 subcomplex. Contacts the 5S rRNA and the P site tRNA. Forms a bridge to the 30S subunit in the 70S ribosome.

Its function is as follows. This is one of the proteins that bind and probably mediate the attachment of the 5S RNA into the large ribosomal subunit, where it forms part of the central protuberance. In the 70S ribosome it contacts protein S13 of the 30S subunit (bridge B1b), connecting the 2 subunits; this bridge is implicated in subunit movement. Contacts the P site tRNA; the 5S rRNA and some of its associated proteins might help stabilize positioning of ribosome-bound tRNAs. This chain is Large ribosomal subunit protein uL5, found in Desulforamulus reducens (strain ATCC BAA-1160 / DSM 100696 / MI-1) (Desulfotomaculum reducens).